The primary structure comprises 96 residues: UPF0235 protein YggU (96 aa).

It belongs to the UPF0235 family.

This chain is UPF0235 protein YggU, found in Salmonella newport (strain SL254).